Here is a 262-residue protein sequence, read N- to C-terminus: MSRAAPFTVLIPARLASTRLPNKPLADIAGLPMVVHVARRASQSGAQRCVVAADDARIVQACQAHGVQALLTRADHASGSDRLAEACELLGLAGEDIVVNVQGDEPLIDPRLIDAVAALLHARGDASMGTAAHAIDSAEDFANPNVVKVVLDAQGLAHYFSRAPIPHARDHGPGSLWWQPGQTGVPVGFAPLRHIGIYSYRAGFLRRFPQLPAAPTEQLEALEQLRALWHGHRIAVHVTGSAPGAGVDTPADLERVRTLLGG.

The protein belongs to the KdsB family.

It localises to the cytoplasm. It catalyses the reaction 3-deoxy-alpha-D-manno-oct-2-ulosonate + CTP = CMP-3-deoxy-beta-D-manno-octulosonate + diphosphate. It functions in the pathway nucleotide-sugar biosynthesis; CMP-3-deoxy-D-manno-octulosonate biosynthesis; CMP-3-deoxy-D-manno-octulosonate from 3-deoxy-D-manno-octulosonate and CTP: step 1/1. The protein operates within bacterial outer membrane biogenesis; lipopolysaccharide biosynthesis. Its function is as follows. Activates KDO (a required 8-carbon sugar) for incorporation into bacterial lipopolysaccharide in Gram-negative bacteria. The polypeptide is 3-deoxy-manno-octulosonate cytidylyltransferase (Acidovorax ebreus (strain TPSY) (Diaphorobacter sp. (strain TPSY))).